The following is a 282-amino-acid chain: Protein FRG2-like-2 (282 aa).

Positions 1-10 (MGKGNEDPDL) are enriched in basic and acidic residues. 2 disordered regions span residues 1 to 96 (MGKG…QENC) and 249 to 282 (GPGD…LGAP). Composition is skewed to polar residues over residues 13–31 (SSIQ…SFTE), 58–68 (RQAGSDPNPNK), and 79–94 (GNST…SYQE).

It belongs to the FRG2 family.

It is found in the nucleus. The sequence is that of Protein FRG2-like-2 (FRG2C) from Homo sapiens (Human).